The sequence spans 347 residues: NADH-ubiquinone oxidoreductase chain 2 (347 aa).

11 helical membrane passes run 3–23 (PPIL…VLMS), 25–45 (HWLM…PILM), 59–79 (YFLT…INLM), 96–116 (TMMT…FWVP), 122–142 (VHMS…LLVL), 149–169 (IDPN…GWGG), 178–198 (ILAY…LYNP), 200–220 (MMLL…MLFM), 242–262 (SLIL…GFIP), 274–294 (EMII…YFYM), and 323–343 (MILL…TPLL).

This sequence belongs to the complex I subunit 2 family. As to quaternary structure, core subunit of respiratory chain NADH dehydrogenase (Complex I) which is composed of 45 different subunits. Interacts with TMEM242.

It localises to the mitochondrion inner membrane. The enzyme catalyses a ubiquinone + NADH + 5 H(+)(in) = a ubiquinol + NAD(+) + 4 H(+)(out). Its function is as follows. Core subunit of the mitochondrial membrane respiratory chain NADH dehydrogenase (Complex I) that is believed to belong to the minimal assembly required for catalysis. Complex I functions in the transfer of electrons from NADH to the respiratory chain. The immediate electron acceptor for the enzyme is believed to be ubiquinone. The protein is NADH-ubiquinone oxidoreductase chain 2 of Suricata suricatta (Meerkat).